Consider the following 45-residue polypeptide: MKSNRQARHILGLDHKISNQRKIVTEGDKSSVVNNPTGRKRPAEK.

The interval 21–45 (RKIVTEGDKSSVVNNPTGRKRPAEK) is disordered.

Belongs to the SRA family. Associates exclusively with the 30S subunit; there is 0.1 copy per ribosome in the exponential phase and 0.4 copies per ribosome in the stationary phase.

Its function is as follows. Although this protein associates with the 30S subunit of the ribosome it is not considered to be a bona fide ribosomal protein. The sequence is that of Stationary-phase-induced ribosome-associated protein (sra) from Escherichia coli O157:H7.